An 891-amino-acid chain; its full sequence is Transportin-1 (891 aa).

HEAT repeat units lie at residues 14–40, 45–83, 92–125, 131–168, 178–208, 221–248, 260–287, 303–381, 389–420, 432–459, 477–510, 518–551, 559–597, 605–653, 664–695, 703–740, 748–784, 792–825, and 834–866; these read GLRE…QQLQ, FPDF…ATFS, YVKS…IVRV, LFQA…LDVD, NVFM…QYIV, YLQG…VQLI, KNVT…FWSA, PRLI…LSNV, TLMP…GAIA, PQIV…TLSR, FDKI…EEEA, LGII…ADAV, KYLD…QALG, EPVF…GLGA, LRDI…RVCP, QEFL…IKIG, ITVV…WVCP, DHFM…VAAN, and TFIC…KQML. The Importin N-terminal domain occupies 35–103; the sequence is IWQQLQHYSQ…KSELLPCIGA (69 aa). Residues 317–330 show a composition bias toward acidic residues; it reads DDDESLADAEEDES. The disordered stretch occupies residues 317 to 337; sequence DDDESLADAEEDESFPDRDQD.

This sequence belongs to the importin beta family. Importin beta-2 subfamily.

Its subcellular location is the cytoplasm. It is found in the nucleus. The protein localises to the nucleoplasm. Its function is as follows. Functions in nuclear protein import as nuclear transport receptor. Serves as receptor for nuclear localization signals (NLS) in cargo substrates. Is thought to mediate docking of the importin/substrate complex to the nuclear pore complex (NPC) through binding to nucleoporin and the complex is subsequently translocated through the pore by an energy requiring, Ran-dependent mechanism. At the nucleoplasmic side of the NPC, Ran binds to the importin, the importin/substrate complex dissociates and importin is re-exported from the nucleus to the cytoplasm where GTP hydrolysis releases Ran. The directionality of nuclear import is thought to be conferred by an asymmetric distribution of the GTP- and GDP-bound forms of Ran between the cytoplasm and nucleus. This chain is Transportin-1 (TRN1), found in Oryza sativa subsp. japonica (Rice).